We begin with the raw amino-acid sequence, 374 residues long: Carbamoyl phosphate synthase small chain (374 aa).

The interval 1–183 (MVLADGQMIW…QNGYSVVDNQ (183 aa)) is CPSase. The L-glutamine site is built by S41, G235, and G237. Positions 187 to 374 (HVVAIDYGLK…FIDLIAKERP (188 aa)) constitute a Glutamine amidotransferase type-1 domain. The active-site Nucleophile is the C264. L-glutamine contacts are provided by L265, Q268, N306, G308, and F309. Active-site residues include H348 and E350.

Belongs to the CarA family. As to quaternary structure, composed of two chains; the small (or glutamine) chain promotes the hydrolysis of glutamine to ammonia, which is used by the large (or ammonia) chain to synthesize carbamoyl phosphate. Tetramer of heterodimers (alpha,beta)4.

It catalyses the reaction hydrogencarbonate + L-glutamine + 2 ATP + H2O = carbamoyl phosphate + L-glutamate + 2 ADP + phosphate + 2 H(+). The catalysed reaction is L-glutamine + H2O = L-glutamate + NH4(+). Its pathway is amino-acid biosynthesis; L-arginine biosynthesis; carbamoyl phosphate from bicarbonate: step 1/1. It participates in pyrimidine metabolism; UMP biosynthesis via de novo pathway; (S)-dihydroorotate from bicarbonate: step 1/3. Small subunit of the glutamine-dependent carbamoyl phosphate synthetase (CPSase). CPSase catalyzes the formation of carbamoyl phosphate from the ammonia moiety of glutamine, carbonate, and phosphate donated by ATP, constituting the first step of 2 biosynthetic pathways, one leading to arginine and/or urea and the other to pyrimidine nucleotides. The small subunit (glutamine amidotransferase) binds and cleaves glutamine to supply the large subunit with the substrate ammonia. The chain is Carbamoyl phosphate synthase small chain from Zymomonas mobilis subsp. mobilis (strain ATCC 31821 / ZM4 / CP4).